The primary structure comprises 706 residues: MNPQQQRMAAIGTDKELSDLLDFSAMFSPPVNSGKTRPTTLGSSQFSGSGMDERGGTTSWGTSGQPSPSYDSSRGFTDSPHYSDHLNDSRLGTHEGLSPTPFMNSNLIGKTSERGSFSLYSRDSGLSGCQSSLLRQDLGLGSPAQLSSSGKPGTPYYSFSATSSRRRPLHDSVALDPLQAKKVRKVPPGLPSSVYAPSPNSDDFNRESPSYPSPKPPTSMFASTFFMQDGTHSSSDLWSSSNGMSQPGFGGILGTSTSHMSQSSSYGSLHSHDRLSYPPHSVSPTDINTSLPPMSSFHRGSTSSSPYVAASHTPPINGSDSILGTRGNAAGSSQTGDALGKALASIYSPDHTSSSFPSNPSTPVGSPSPLTGTSQWPRAGGQAPSSPSYENSLHSLKNRVEQQLHEHLQDAMSFLKDVCEQSRMEDRLDRLDDAIHVLRNHAVGPSTSLPTSHSDIHSLLGPSHNASIGNLNSNYGGSSLVTNSRSASMVGTHREDSVSLNGNHSVLSSTVAASNTELNHKTPENFRGGVQNQSGSVVPTEIKTENKEKDENLHEPPSSDDMKSDDESSQKDIKVSSRGRTSSTNEDEDLNPEQKIEREKERRMANNARERLRVRDINEAFKELGRMCQLHLKSEKPQTKLLILHQAVAVILSLEQQVRERNLNPKAACLKRREEEKVSAASAEPPNTLPGAHPGLSESTNPMGHL.

Positions 25-109 are disordered; the sequence is AMFSPPVNSG…TPFMNSNLIG (85 aa). 2 stretches are compositionally biased toward polar residues: residues 30–48 and 56–76; these read PVNS…QFSG and GTTS…SRGF. A phosphoserine mark is found at serine 47, serine 67, and serine 79. The segment covering 81 to 93 has biased composition (basic and acidic residues); it reads HYSDHLNDSRLGT. Serine 98 carries the post-translational modification Phosphoserine. A Glycyl lysine isopeptide (Lys-Gly) (interchain with G-Cter in SUMO2) cross-link involves residue lysine 110. Phosphoserine is present on residues serine 116 and serine 124. Residues 119–140 form a leucine-zipper region; it reads LYSRDSGLSGCQSSLLRQDLGL. 2 disordered regions span residues 140–222 and 249–313; these read LGSP…SMFA and FGGI…ASHT. Residues 144 to 163 are compositionally biased toward polar residues; the sequence is AQLSSSGKPGTPYYSFSATS. Lysine 181 is covalently cross-linked (Glycyl lysine isopeptide (Lys-Gly) (interchain with G-Cter in SUMO2)). A Nuclear localization signal motif is present at residues 181–188; the sequence is KKVRKVPP. A compositionally biased stretch (low complexity) spans 256–269; sequence STSHMSQSSSYGSL. The span at 282-306 shows a compositional bias: polar residues; it reads VSPTDINTSLPPMSSFHRGSTSSSP. The residue at position 313 (threonine 313) is a Phosphothreonine. Serine 333 carries the post-translational modification Phosphoserine. Disordered regions lie at residues 349–392 and 520–604; these read PDHT…YENS and HKTP…ERRM. Positions 352-363 are enriched in low complexity; it reads TSSSFPSNPSTP. 2 stretches are compositionally biased toward polar residues: residues 364–376 and 383–392; these read VGSP…TSQW and APSSPSYENS. Serine 392 carries the phosphoserine modification. Composition is skewed to basic and acidic residues over residues 542–554 and 560–575; these read IKTE…ENLH and DDMK…DIKV. Residue lysine 543 forms a Glycyl lysine isopeptide (Lys-Gly) (interchain with G-Cter in SUMO2) linkage. Serine 564 bears the Phosphoserine mark. Lysine 574 is covalently cross-linked (Glycyl lysine isopeptide (Lys-Gly) (interchain with G-Cter in SUMO2)). Threonine 581 is subject to Phosphothreonine. A phosphoserine mark is found at serine 582 and serine 583. The span at 592-604 shows a compositional bias: basic and acidic residues; that stretch reads PEQKIEREKERRM. The bHLH domain maps to 601–654; sequence ERRMANNARERLRVRDINEAFKELGRMCQLHLKSEKPQTKLLILHQAVAVILSL. Glycyl lysine isopeptide (Lys-Gly) (interchain with G-Cter in SUMO2) cross-links involve residues lysine 633 and lysine 677. Residues 656–679 form a class A specific domain region; the sequence is QQVRERNLNPKAACLKRREEEKVS. A disordered region spans residues 674–706; that stretch reads EEEKVSAASAEPPNTLPGAHPGLSESTNPMGHL. Positions 697-706 are enriched in polar residues; the sequence is SESTNPMGHL.

As to quaternary structure, efficient DNA binding requires dimerization with another bHLH protein. Forms homo- or heterooligomers with myogenin, E12 and ITF2 proteins and RUNX1T1. Interacts with PTF1A. Interacts with NEUROD2. Interacts with BHLHA9. In terms of tissue distribution, widely expressed.

Its subcellular location is the nucleus. Its function is as follows. Transcriptional regulator. Involved in the initiation of neuronal differentiation. Activates transcription by binding to the E box (5'-CANNTG-3'). May be involved in the functional network that regulates the development of the GnRH axis. The sequence is that of Transcription factor 12 (Tcf12) from Mus musculus (Mouse).